Here is a 295-residue protein sequence, read N- to C-terminus: MTNMKNKFGNKLIGAHVSAAGGVDQAPLRAREIGANAFALFTKNQRQWVAKPLEAKTISAFKANCKMLGFGAEHILPHDSYLINLGAPEAEKLDKSRAAFIDEMERCNQLGLTLLNFHPGSHLKKVSEQECLATIAESINLAHKTVPDVVAVIENTAGQGTNLGWKFEHLAEIIEQVEDKDRVGVCIDTCHTFTAGYDLRTKEDCERTFAEFDRIVGMHYLRAMHLNDSKVEFASKVDRHHSLGKGEIGWDCFEYIAKDSRFDGIPLILETIDPDIWQQEINTLRQFHLAAINNQ.

The Zn(2+) site is built by H78, H118, E154, D188, H191, H225, D238, H240, and E270.

This sequence belongs to the AP endonuclease 2 family. Requires Zn(2+) as cofactor.

The enzyme catalyses Endonucleolytic cleavage to 5'-phosphooligonucleotide end-products.. Endonuclease IV plays a role in DNA repair. It cleaves phosphodiester bonds at apurinic or apyrimidinic (AP) sites, generating a 3'-hydroxyl group and a 5'-terminal sugar phosphate. This chain is Probable endonuclease 4, found in Vibrio parahaemolyticus serotype O3:K6 (strain RIMD 2210633).